A 396-amino-acid polypeptide reads, in one-letter code: Putative ribosomal RNA large subunit methyltransferase YwbD (396 aa).

The region spanning 1–79 (MKLLTLKKAH…KHEQIDQAFF (79 aa)) is the PUA domain.

This sequence belongs to the methyltransferase superfamily. RlmI family.

Its subcellular location is the cytoplasm. The polypeptide is Putative ribosomal RNA large subunit methyltransferase YwbD (ywbD) (Bacillus subtilis (strain 168)).